The chain runs to 634 residues: Chaperone protein DnaK (634 aa).

A Phosphothreonine; by autocatalysis modification is found at T199. Positions 601-618 (AAAGQAQAESGAGAQGNA) are enriched in low complexity. The tract at residues 601-634 (AAAGQAQAESGAGAQGNAKPDDVVDAEFEEVDKK) is disordered. Residues 623-634 (VVDAEFEEVDKK) are compositionally biased toward acidic residues.

The protein belongs to the heat shock protein 70 family.

Acts as a chaperone. This chain is Chaperone protein DnaK, found in Acidithiobacillus ferrooxidans (strain ATCC 23270 / DSM 14882 / CIP 104768 / NCIMB 8455) (Ferrobacillus ferrooxidans (strain ATCC 23270)).